Here is a 346-residue protein sequence, read N- to C-terminus: Phosphoribosylformylglycinamidine cyclo-ligase (346 aa).

It belongs to the AIR synthase family.

The protein resides in the cytoplasm. The catalysed reaction is 2-formamido-N(1)-(5-O-phospho-beta-D-ribosyl)acetamidine + ATP = 5-amino-1-(5-phospho-beta-D-ribosyl)imidazole + ADP + phosphate + H(+). The protein operates within purine metabolism; IMP biosynthesis via de novo pathway; 5-amino-1-(5-phospho-D-ribosyl)imidazole from N(2)-formyl-N(1)-(5-phospho-D-ribosyl)glycinamide: step 2/2. The protein is Phosphoribosylformylglycinamidine cyclo-ligase of Prochlorococcus marinus (strain NATL2A).